We begin with the raw amino-acid sequence, 126 residues long: Holo-[acyl-carrier-protein] synthase (126 aa).

Mg(2+) contacts are provided by Asp-9 and Glu-58.

This sequence belongs to the P-Pant transferase superfamily. AcpS family. Mg(2+) is required as a cofactor.

It localises to the cytoplasm. It carries out the reaction apo-[ACP] + CoA = holo-[ACP] + adenosine 3',5'-bisphosphate + H(+). In terms of biological role, transfers the 4'-phosphopantetheine moiety from coenzyme A to a Ser of acyl-carrier-protein. In Vibrio campbellii (strain ATCC BAA-1116), this protein is Holo-[acyl-carrier-protein] synthase.